Consider the following 682-residue polypeptide: Inactive protein-arginine deiminase type-6 (682 aa).

Residues Ser-2 and Ser-434 each carry the phosphoserine modification.

This sequence belongs to the protein arginine deiminase family. In terms of assembly, homodimers. Associates with alpha-tubulin. Phosphorylation at Ser-2, possibly by RSK-type kinases, and Ser-434 creates binding sites for 14-3-3 proteins. As to expression, expressed at very high levels in oocytes. Weakly expressed in testis. Expressed in primordial, primary, secondary and Graafian follicles, and in immature oocytes, mature eggs and blastocyst (at protein level).

It is found in the cytoplasm. The protein localises to the nucleus. The protein resides in the cytoplasmic vesicle. Its subcellular location is the secretory vesicle. It localises to the cortical granule. Functionally, structural constituent of cytoplasmic lattices, which plays a key role in early embryonic development. Cytoplasmic lattices consist in fibrous structures found in the cytoplasm of oocytes and preimplantation embryos. They are required to store maternal proteins critical for embryonic development, such as ribosomal proteins and proteins that control epigenetic reprogramming of the preimplantation embryo, and prevent their degradation or activation. In contrast to other members of the family, does not show protein-arginine deiminase activity due to its inability to bind Ca(2+). In Mus musculus (Mouse), this protein is Inactive protein-arginine deiminase type-6.